We begin with the raw amino-acid sequence, 360 residues long: Peptide chain release factor 1 (360 aa).

Gln236 is modified (N5-methylglutamine).

Belongs to the prokaryotic/mitochondrial release factor family. Post-translationally, methylated by PrmC. Methylation increases the termination efficiency of RF1.

It localises to the cytoplasm. In terms of biological role, peptide chain release factor 1 directs the termination of translation in response to the peptide chain termination codons UAG and UAA. The polypeptide is Peptide chain release factor 1 (Methylococcus capsulatus (strain ATCC 33009 / NCIMB 11132 / Bath)).